A 417-amino-acid polypeptide reads, in one-letter code: MPIQLGLQRMLQLLKHLGNPQESFCAVQIAGTNGKGSICSYIYTSLLQAAIKTGRYTSPHFLEPRDTISINGQIASEEIFNTCWKQVIEVDRRFRTKATEFELLTATAFQCFHHSGVRVAVIETGMGGRLDATNVFEEPVLSIISRICLDHQAFLGNTLEAIAKEKAGIFKKNVPCVVDGLNEVNVLNQLKLSAEETRAHPFYLAKGKSGENKNEWIINTPNWGTNTFSTPLKGDYQGQNLACAVTALDILSSSFSIMLPHVQNGVKNTSWPGRLDIRSVPSLGDILFDGAHNKEAAIELAKFVNSQRREHNKSVSWVVAFTNTKDVTGIMKILLRKGDTVIATNFSSVSGMPWIKSMEPEVIKNSISSESSVECYTADNLTISEILRLAKEKNSSVIVCGSLYLLGDMYRYLKLDV.

An ATP-binding site is contributed by 34-37; sequence GKGS. Mg(2+) contacts are provided by Ser58, Glu123, and His151. ATP is bound by residues Arg274 and Asp289.

The protein belongs to the folylpolyglutamate synthase family.

It catalyses the reaction 7,8-dihydropteroate + L-glutamate + ATP = 7,8-dihydrofolate + ADP + phosphate + H(+). It functions in the pathway cofactor biosynthesis; tetrahydrofolylpolyglutamate biosynthesis. Glutamate-adding enzyme which catalyzes the binding of the first glutamyl side chain to dihydropteroate. Leads to the de nove synthesis of tetrahydrofolate. de novo. The protein is Probable dihydrofolate synthetase (fol3) of Schizosaccharomyces pombe (strain 972 / ATCC 24843) (Fission yeast).